The sequence spans 159 residues: Cyclic pyranopterin monophosphate synthase (159 aa).

Substrate is bound by residues 75-77 and 113-114; these read MCH and ME. The active site involves Asp128.

Belongs to the MoaC family. In terms of assembly, homohexamer; trimer of dimers.

It carries out the reaction (8S)-3',8-cyclo-7,8-dihydroguanosine 5'-triphosphate = cyclic pyranopterin phosphate + diphosphate. It participates in cofactor biosynthesis; molybdopterin biosynthesis. Functionally, catalyzes the conversion of (8S)-3',8-cyclo-7,8-dihydroguanosine 5'-triphosphate to cyclic pyranopterin monophosphate (cPMP). The chain is Cyclic pyranopterin monophosphate synthase from Desulfatibacillum aliphaticivorans.